Consider the following 310-residue polypeptide: Upstream stimulatory factor 1 (310 aa).

Residues 1-17 (MKGQQKTAETEEGTVQI) are compositionally biased toward polar residues. Disordered stretches follow at residues 1–26 (MKGQQKTAETEEGTVQIQEGAVATGE) and 171–209 (QGGSQRSIAPRTHPYSPKSEAPRTTRDEKRRAQHNEVER). A compositionally biased stretch (basic and acidic residues) spans 190 to 209 (EAPRTTRDEKRRAQHNEVER). The 56-residue stretch at 199 to 254 (KRRAQHNEVERRRRDKINNWIVQLSKIIPDCSMESTKSGQSKGGILSKACDYIQEL) folds into the bHLH domain. Residues 271–292 (LQLDNDVLRQQVEDLKNKNLLL) form a leucine-zipper region. Lysine 306 is covalently cross-linked (Glycyl lysine isopeptide (Lys-Gly) (interchain with G-Cter in SUMO2)).

As to quaternary structure, efficient DNA binding requires dimerization with another bHLH protein. Binds DNA as a homodimer or a heterodimer (USF1/USF2).

Its subcellular location is the nucleus. Functionally, transcription factor that binds to a symmetrical DNA sequence (E-boxes) (5'-CACGTG-3') that is found in a variety of viral and cellular promoters. The protein is Upstream stimulatory factor 1 (USF1) of Bos taurus (Bovine).